Reading from the N-terminus, the 199-residue chain is Recombination protein RecR (199 aa).

The C4-type zinc finger occupies 57-72; sequence CSICGNITDEDPCAIC. The Toprim domain occupies 80–176; that stretch reads STILVVEQPK…KVTRLAHGLS (97 aa).

This sequence belongs to the RecR family.

Functionally, may play a role in DNA repair. It seems to be involved in an RecBC-independent recombinational process of DNA repair. It may act with RecF and RecO. The chain is Recombination protein RecR from Lacticaseibacillus casei (strain BL23) (Lactobacillus casei).